Consider the following 132-residue polypeptide: Small ribosomal subunit protein uS8 (132 aa).

Belongs to the universal ribosomal protein uS8 family. In terms of assembly, part of the 30S ribosomal subunit. Contacts proteins S5 and S12.

In terms of biological role, one of the primary rRNA binding proteins, it binds directly to 16S rRNA central domain where it helps coordinate assembly of the platform of the 30S subunit. This Rhodospirillum centenum (strain ATCC 51521 / SW) protein is Small ribosomal subunit protein uS8.